We begin with the raw amino-acid sequence, 461 residues long: Cysteine--tRNA ligase (461 aa).

Zn(2+) is bound at residue Cys30. The 'HIGH' region signature appears at 32 to 42; it reads VTVYDLCHIGH. The Zn(2+) site is built by Cys211, His236, and Glu240. Positions 268–272 match the 'KMSKS' region motif; that stretch reads KMSKS. Residue Lys271 participates in ATP binding.

Belongs to the class-I aminoacyl-tRNA synthetase family. In terms of assembly, monomer. Zn(2+) is required as a cofactor.

The protein localises to the cytoplasm. The enzyme catalyses tRNA(Cys) + L-cysteine + ATP = L-cysteinyl-tRNA(Cys) + AMP + diphosphate. The chain is Cysteine--tRNA ligase from Shewanella sp. (strain MR-7).